A 235-amino-acid chain; its full sequence is SMN complex subunit yip11/gem2 (235 aa).

The interval 1 to 34 (MPSKRKRNPLQYQTSGSLDEETNQRSAFPQIDNN) is disordered. Positions 24-34 (QRSAFPQIDNN) are enriched in polar residues. Phosphoserine is present on residues S117 and S118.

The protein belongs to the gemin-2 family. As to quaternary structure, part of the core SMN complex at least composed of smn1, yip11/gem2, gem6, gem7 and gem8. Interacts with smn1; the interaction is direct.

It localises to the nucleus. In terms of biological role, the SMN complex catalyzes the assembly of small nuclear ribonucleoproteins (snRNPs), the building blocks of the spliceosome, and thereby plays an important role in the splicing of cellular pre-mRNAs. Most spliceosomal snRNPs contain a common set of Sm proteins smb1, smd1, smd2, smd3, sme1, smf1 and smg1 that assemble in a heptameric protein ring on the Sm site of the small nuclear RNA to form the core snRNP. In the cytosol, the Sm proteins smd1, smd2, sme1, smf1 and smg1 (5Sm) are trapped in an inactive 6S pICln-Sm complex by the chaperone saf5. To complete assembly of core snRNPs, the SMN complex accepts 5Sm from saf5. Binding of snRNA inside 5Sm ultimately triggers eviction of the SMN complex, thereby allowing binding of smd3 and smb1 to complete assembly of the core snRNP. Within the SMN complex, yip11/gem2 constrains the conformation of 5Sm, thereby promoting 5Sm binding to snRNA containing the snRNP code (a nonameric Sm site and a 3'-adjacent stem-loop), thus preventing progression of assembly until a cognate substrate is bound. This Schizosaccharomyces pombe (strain 972 / ATCC 24843) (Fission yeast) protein is SMN complex subunit yip11/gem2 (yip11).